A 195-amino-acid polypeptide reads, in one-letter code: MRESIVERRTSETDIVLKIGLDRTEPHQITISTGIPFFDHMVQAMSRHGGFDLNITAKGDLEVDSHHTIEDIGIVLGTALQQALGDGRGIKRFGYAIIPMDEALAEAVLDCGGRGYLVFKGTFGNSTVGGIDTSLFEHFFYSLCIHAGITAHIRFSGQNDHHTAEAIFKAFGIALGQAVTIIPESNQIPSTKGTL.

This sequence belongs to the imidazoleglycerol-phosphate dehydratase family.

The protein resides in the cytoplasm. It catalyses the reaction D-erythro-1-(imidazol-4-yl)glycerol 3-phosphate = 3-(imidazol-4-yl)-2-oxopropyl phosphate + H2O. It participates in amino-acid biosynthesis; L-histidine biosynthesis; L-histidine from 5-phospho-alpha-D-ribose 1-diphosphate: step 6/9. This is Imidazoleglycerol-phosphate dehydratase from Methanosphaerula palustris (strain ATCC BAA-1556 / DSM 19958 / E1-9c).